The sequence spans 123 residues: Large ribosomal subunit protein bL12 (123 aa).

The protein belongs to the bacterial ribosomal protein bL12 family. As to quaternary structure, homodimer. Part of the ribosomal stalk of the 50S ribosomal subunit. Forms a multimeric L10(L12)X complex, where L10 forms an elongated spine to which 2 to 4 L12 dimers bind in a sequential fashion. Binds GTP-bound translation factors.

Forms part of the ribosomal stalk which helps the ribosome interact with GTP-bound translation factors. Is thus essential for accurate translation. The chain is Large ribosomal subunit protein bL12 from Bartonella bacilliformis (strain ATCC 35685 / KC583 / Herrer 020/F12,63).